Consider the following 426-residue polypeptide: Phosphomethylpyrimidine synthase (426 aa).

Residues N65, M94, Y123, H162, 184–186 (SRG), 225–228 (DGMR), and E264 contribute to the substrate site. H268 is a Zn(2+) binding site. Y291 contacts substrate. Residue H332 participates in Zn(2+) binding. 3 residues coordinate [4Fe-4S] cluster: C408, C411, and C415.

The protein belongs to the ThiC family. The cofactor is [4Fe-4S] cluster.

It catalyses the reaction 5-amino-1-(5-phospho-beta-D-ribosyl)imidazole + S-adenosyl-L-methionine = 4-amino-2-methyl-5-(phosphooxymethyl)pyrimidine + CO + 5'-deoxyadenosine + formate + L-methionine + 3 H(+). The protein operates within cofactor biosynthesis; thiamine diphosphate biosynthesis. In terms of biological role, catalyzes the synthesis of the hydroxymethylpyrimidine phosphate (HMP-P) moiety of thiamine from aminoimidazole ribotide (AIR) in a radical S-adenosyl-L-methionine (SAM)-dependent reaction. This chain is Phosphomethylpyrimidine synthase, found in Methanococcus maripaludis (strain C7 / ATCC BAA-1331).